The primary structure comprises 789 residues: GDH/6PGL endoplasmic bifunctional protein (789 aa).

Positions 1-16 (MLLAAMCLALLGCLQA) are cleaved as a signal peptide. Gln-17 is modified (pyrrolidone carboxylic acid). Residues 17-524 (QELKGHVSII…GGQLTFSQQQ (508 aa)) form a hexose-6-phosphate dehydrogenase region. NADP(+) contacts are provided by residues 29 to 36 (GATGDLAK) and Tyr-146. Asn-154 carries an N-linked (GlcNAc...) asparagine glycan. Lys-171 serves as a coordination point for NADP(+). D-glucose 6-phosphate-binding positions include Lys-171, 201-205 (HYLGK), Glu-240, and Asp-259. The residue at position 205 (Lys-205) is an N6-succinyllysine. His-264 serves as the catalytic Proton acceptor. Asn-279 is a glycosylation site (N-linked (GlcNAc...) asparagine). Residues Lys-357 and Arg-362 each coordinate D-glucose 6-phosphate. An NADP(+)-binding site is contributed by Arg-367. An N6-succinyllysine modification is found at Lys-424. Residues 525 to 538 (LEVLIPDLGSVPKP) are linker. The tract at residues 539 to 789 (SDFQVLGARY…WYMDYEAFLG (251 aa)) is 6-phosphogluconolactonase. Trp-615 serves as a coordination point for NADP(+). N-linked (GlcNAc...) asparagine glycosylation is present at Asn-681.

This sequence in the N-terminal section; belongs to the glucose-6-phosphate dehydrogenase family. In the C-terminal section; belongs to the glucosamine/galactosamine-6-phosphate isomerase family. 6-phosphogluconolactonase subfamily. In terms of assembly, homodimer. Expressed in liver (at protein level). Expressed in muscles. Expressed in adipose tissues.

The protein localises to the endoplasmic reticulum lumen. The catalysed reaction is D-glucose 6-phosphate + NAD(+) = 6-phospho-D-glucono-1,5-lactone + NADH + H(+). It catalyses the reaction D-glucose 6-phosphate + NADP(+) = 6-phospho-D-glucono-1,5-lactone + NADPH + H(+). It carries out the reaction 6-phospho-D-glucono-1,5-lactone + H2O = 6-phospho-D-gluconate + H(+). The enzyme catalyses 2-deoxy-D-glucose 6-phosphate + NAD(+) = 2-deoxy-6-phospho-D-glucono-1,5-lactone + NADH + H(+). The catalysed reaction is 2-deoxy-D-glucose 6-phosphate + NADP(+) = 2-deoxy-6-phospho-D-glucono-1,5-lactone + NADPH + H(+). It catalyses the reaction D-galactose 6-phosphate + NADP(+) = 6-phospho-D-galactono-1,5-lactone + NADPH + H(+). It carries out the reaction D-galactose 6-phosphate + NAD(+) = 6-phospho-D-galactono-1,5-lactone + NADH + H(+). The enzyme catalyses D-glucosamine 6-phosphate + NADP(+) = 2-amino-2-deoxy-6-phospho-D-glucono-1,5-lactone + NADPH + 2 H(+). The catalysed reaction is D-glucose + NAD(+) = D-glucono-1,5-lactone + NADH + H(+). It catalyses the reaction D-glucose + NADP(+) = D-glucono-1,5-lactone + NADPH + H(+). It carries out the reaction D-glucose 6-sulfate + NADP(+) = 6-sulfo-D-glucono-1,5-lactone + NADPH + H(+). The protein operates within carbohydrate degradation; pentose phosphate pathway; D-ribulose 5-phosphate from D-glucose 6-phosphate (oxidative stage). Its pathway is carbohydrate degradation; pentose phosphate pathway; D-ribulose 5-phosphate from D-glucose 6-phosphate (oxidative stage): step 2/3. In terms of biological role, bifunctional enzyme localized in the lumen of the endoplasmic reticulum that catalyzes the first two steps of the oxidative branch of the pentose phosphate pathway/shunt, an alternative to glycolysis and a major source of reducing power and metabolic intermediates for biosynthetic processes. Has a hexose-6-phosphate dehydrogenase activity, with broad substrate specificity compared to glucose-6-phosphate 1-dehydrogenase/G6PD, and catalyzes the first step of the pentose phosphate pathway. In addition, acts as a 6-phosphogluconolactonase and catalyzes the second step of the pentose phosphate pathway. May have a dehydrogenase activity for alternative substrates including glucosamine 6-phosphate and glucose 6-sulfate. The main function of this enzyme is to provide reducing equivalents such as NADPH to maintain the adequate levels of reductive cofactors in the oxidizing environment of the endoplasmic reticulum. By producing NADPH that is needed by reductases of the lumen of the endoplasmic reticulum like corticosteroid 11-beta-dehydrogenase isozyme 1/HSD11B1, indirectly regulates their activity. The protein is GDH/6PGL endoplasmic bifunctional protein of Mus musculus (Mouse).